Here is a 529-residue protein sequence, read N- to C-terminus: Bifunctional purine biosynthesis protein PurH (529 aa).

Residues 8 to 158 (PSAPDLVAPK…KNHGYVAVCT (151 aa)) enclose the MGS-like domain.

The protein belongs to the PurH family.

The enzyme catalyses (6R)-10-formyltetrahydrofolate + 5-amino-1-(5-phospho-beta-D-ribosyl)imidazole-4-carboxamide = 5-formamido-1-(5-phospho-D-ribosyl)imidazole-4-carboxamide + (6S)-5,6,7,8-tetrahydrofolate. It carries out the reaction IMP + H2O = 5-formamido-1-(5-phospho-D-ribosyl)imidazole-4-carboxamide. It participates in purine metabolism; IMP biosynthesis via de novo pathway; 5-formamido-1-(5-phospho-D-ribosyl)imidazole-4-carboxamide from 5-amino-1-(5-phospho-D-ribosyl)imidazole-4-carboxamide (10-formyl THF route): step 1/1. Its pathway is purine metabolism; IMP biosynthesis via de novo pathway; IMP from 5-formamido-1-(5-phospho-D-ribosyl)imidazole-4-carboxamide: step 1/1. This Caulobacter vibrioides (strain ATCC 19089 / CIP 103742 / CB 15) (Caulobacter crescentus) protein is Bifunctional purine biosynthesis protein PurH.